A 47-amino-acid chain; its full sequence is Small, acid-soluble spore protein N (47 aa).

The segment at 1 to 47 is disordered; sequence MSNPKRSPNHFAPNHIGTQPRAAGGNKGKQMQDQSGQHAQVIQTKGE. Residues 29–47 are compositionally biased toward polar residues; that stretch reads KQMQDQSGQHAQVIQTKGE.

It belongs to the SspN family.

The protein resides in the spore core. The sequence is that of Small, acid-soluble spore protein N from Geobacillus thermodenitrificans (strain NG80-2).